The following is a 242-amino-acid chain: Type III pantothenate kinase (242 aa).

7-14 (DLGNSRFK) is a binding site for ATP. Residues Tyr91 and 98-101 (GVDR) contribute to the substrate site. The Proton acceptor role is filled by Asp100. Thr121 contributes to the ATP binding site. Thr171 contributes to the substrate binding site.

Belongs to the type III pantothenate kinase family. In terms of assembly, homodimer. NH4(+) is required as a cofactor. It depends on K(+) as a cofactor.

The protein resides in the cytoplasm. It carries out the reaction (R)-pantothenate + ATP = (R)-4'-phosphopantothenate + ADP + H(+). The protein operates within cofactor biosynthesis; coenzyme A biosynthesis; CoA from (R)-pantothenate: step 1/5. Catalyzes the phosphorylation of pantothenate (Pan), the first step in CoA biosynthesis. This chain is Type III pantothenate kinase, found in Xanthomonas axonopodis pv. citri (strain 306).